The following is a 783-amino-acid chain: Transcription factor Sp3 (783 aa).

Basic and acidic residues predominate over residues 1–12 (MTAPEKPVKQEE). Residues 1–55 (MTAPEKPVKQEEMAALDVDGGGGGGGHGEYLQQQQQQQQQHGNGAAAAAAQDTQP) form a disordered region. Residues 19–28 (DGGGGGGGHG) show a composition bias toward gly residues. Positions 29-51 (EYLQQQQQQQQQHGNGAAAAAAQ) are enriched in low complexity. At S72 the chain carries Phosphoserine. A Glycyl lysine isopeptide (Lys-Gly) (interchain with G-Cter in SUMO) cross-link involves residue K122. A transactivation domain (Gln-rich) region spans residues 140-239 (QYVLPLQNLQ…IPQTGQVQVQ (100 aa)). The tract at residues 302–340 (GQAMDSSDNSERTGERVSPDVNETNADTDLFVPTSSSSQ) is disordered. Basic and acidic residues predominate over residues 310–319 (NSERTGERVS). Residues 322-340 (VNETNADTDLFVPTSSSSQ) are compositionally biased toward polar residues. A transactivation domain (Gln-rich) region spans residues 352 to 501 (QQNTNSLTTT…TPVQTLTLGQ (150 aa)). Residues 463–471 (ITWQTFQVQ) carry the 9aaTAD motif. The segment at 536-622 (IQLHPGENAD…RGTNLGKKKQ (87 aa)) is repressor domain. The residue at position 553 (K553) is an N6-acetyllysine; alternate. A Glycyl lysine isopeptide (Lys-Gly) (interchain with G-Cter in SUMO); alternate cross-link involves residue K553. K553 is covalently cross-linked (Glycyl lysine isopeptide (Lys-Gly) (interchain with G-Cter in SUMO1); alternate). K553 participates in a covalent cross-link: Glycyl lysine isopeptide (Lys-Gly) (interchain with G-Cter in SUMO2); alternate. 2 positions are modified to phosphoserine: S565 and S568. K595 is covalently cross-linked (Glycyl lysine isopeptide (Lys-Gly) (interchain with G-Cter in SUMO2)). The segment at 623-647 (HICHIPGCGKVYGKTSHLRAHLRWH) adopts a C2H2-type 1 zinc-finger fold. S648 is subject to Phosphoserine. 2 consecutive C2H2-type zinc fingers follow at residues 653–677 (FICN…RRTH) and 683–705 (FVCP…IKTH).

It belongs to the Sp1 C2H2-type zinc-finger protein family. As to quaternary structure, interacts with HLTF; the interaction may be required for basal transcriptional activity of HLTF. Interacts with HDAC1; the interaction deacetylates SP3 and regulates its transcriptional activity. Interacts with HDAC2 (preferably the CK2-phosphorylated form); the interaction deacetylates SP3 and regulates its transcriptional activity. Ceramides can also regulate acetylation/deacetylation events through altering the interaction of HDAC with SP3. Interacts with MEIS2 isoform Meis2D and PBX1 isoform PBX1a. Acetylated by histone acetyltransferase p300, deacetylated by HDACs. Acetylation/deacetylation states regulate transcriptional activity. Acetylation appears to activate transcription. Alternate sumoylation and acetylation at Lys-553 also control transcriptional activity. In terms of processing, sumoylated on all isoforms. Sumoylated on 2 sites in longer isoforms with Lys-553 being the major site. Sumoylation at this site promotes nuclear localization to the nuclear periphery, nuclear dots and PML nuclear bodies. Sumoylation on Lys-553 represses the transactivation activity, except for the largest isoform which has little effect on transactivation. Alternate sumoylation and acetylation at Lys-553 also control transcriptional activity.

The protein localises to the nucleus. The protein resides in the PML body. Functionally, transcriptional factor that can act as an activator or repressor depending on isoform and/or post-translational modifications. Binds to GT and GC boxes promoter elements. Competes with SP1 for the GC-box promoters. Weak activator of transcription but can activate a number of genes involved in different processes such as cell-cycle regulation, hormone-induction and house-keeping. This Mus musculus (Mouse) protein is Transcription factor Sp3 (Sp3).